Here is a 502-residue protein sequence, read N- to C-terminus: uncharacterized protein (502 aa).

This is an uncharacterized protein from Frog virus 3 (isolate Goorha) (FV-3).